Here is a 397-residue protein sequence, read N- to C-terminus: Mediator of RNA polymerase II transcription subunit 3 (397 aa).

An N-acetylmethionine modification is found at Met-1. The span at 147–165 (ASTPTTTATPHANPITHAH) shows a compositional bias: low complexity. Disordered regions lie at residues 147–227 (ASTP…AQAQ), 288–327 (SMGA…QSQL), and 346–370 (FQQQ…MGMN). Composition is skewed to polar residues over residues 166–178 (SLSN…TMQH) and 189–202 (SGST…HNST). A compositionally biased stretch (basic residues) spans 211-223 (KKPRKPRQTKKAK). Residues 290 to 303 (GAQNQGGQVSMSQF) show a composition bias toward polar residues. Low complexity predominate over residues 309–322 (GSNPNTNTNSNNTP).

The protein belongs to the mediator complex subunit 3 family. In terms of assembly, component of the Mediator complex, which is composed of at least 21 subunits that form three structurally distinct submodules. The Mediator head module contains MED6, MED8, MED11, SRB4/MED17, SRB5/MED18, ROX3/MED19, SRB2/MED20 and SRB6/MED22, the middle module contains MED1, MED4, NUT1/MED5, MED7, CSE2/MED9, NUT2/MED10, SRB7/MED21 and SOH1/MED31, and the tail module contains MED2, PGD1/MED3, RGR1/MED14, GAL11/MED15 and SIN4/MED16. The head and the middle modules interact directly with RNA polymerase II, whereas the elongated tail module interacts with gene-specific regulatory proteins. PGD1/MED3 interacts directly with the CYC8-TUP1 corepressor proteins.

Its subcellular location is the nucleus. Its function is as follows. Component of the Mediator complex, a coactivator involved in the regulated transcription of nearly all RNA polymerase II-dependent genes. Mediator functions as a bridge to convey information from gene-specific regulatory proteins to the basal RNA polymerase II transcription machinery. The Mediator complex, having a compact conformation in its free form, is recruited to promoters by direct interactions with regulatory proteins and serves for the assembly of a functional preinitiation complex with RNA polymerase II and the general transcription factors. The Mediator complex unfolds to an extended conformation and partially surrounds RNA polymerase II, specifically interacting with the unphosphorylated form of the C-terminal domain (CTD) of RNA polymerase II. The Mediator complex dissociates from the RNA polymerase II holoenzyme and stays at the promoter when transcriptional elongation begins. PGD1/MED3 is also involved in direct repeat recombination. The protein is Mediator of RNA polymerase II transcription subunit 3 (PGD1) of Saccharomyces cerevisiae (strain ATCC 204508 / S288c) (Baker's yeast).